Reading from the N-terminus, the 300-residue chain is MGASLNEIKTRIASTKKTSQITRAMQMVSASKLTKSEASSQKFQIYANKVREIVTHLTATQLNDIASDNPRGDINYNSMLISRPVKKTGYIVITADGGLVGGYNSSILKQTMSILEEDHKSPDDYVMIAIGGTGADFFKARGINLAYELRNLSDQPSFDEVRKIVGMATTMYQNEVFDELYVCYNHHINSLTSQFRVEKMLPISDLDPEEATTFDQEYIFEPSKEEILAQLLPQYAESLIYGAIVDAKTAEHAAGMTAMKTATDNAATIIDDLTVSYNRARQGAITQEITEIVAGASALE.

Belongs to the ATPase gamma chain family. In terms of assembly, F-type ATPases have 2 components, CF(1) - the catalytic core - and CF(0) - the membrane proton channel. CF(1) has five subunits: alpha(3), beta(3), gamma(1), delta(1), epsilon(1). CF(0) has three main subunits: a, b and c.

It is found in the cell membrane. Produces ATP from ADP in the presence of a proton gradient across the membrane. The gamma chain is believed to be important in regulating ATPase activity and the flow of protons through the CF(0) complex. In Enterococcus hirae (strain ATCC 9790 / DSM 20160 / JCM 8729 / LMG 6399 / NBRC 3181 / NCIMB 6459 / NCDO 1258 / NCTC 12367 / WDCM 00089 / R), this protein is ATP synthase gamma chain.